The sequence spans 419 residues: 1,4-beta-D-glucan cellobiohydrolase CEL6B (419 aa).

The signal sequence occupies residues 1–47 (MGESFLLLQPASPALSPTPSSLLLGPTITMRADVLIAALATGALVAA). Positions 111 and 113 each coordinate substrate. Catalysis depends on proton donor residues aspartate 152 and aspartate 199. Tryptophan 247 contributes to the substrate binding site. The N-linked (GlcNAc...) asparagine glycan is linked to asparagine 284. Asparagine 287 serves as a coordination point for substrate. Asparagine 298 carries an N-linked (GlcNAc...) asparagine glycan. Residue tryptophan 347 participates in substrate binding. Asparagine 364 is a glycosylation site (N-linked (GlcNAc...) asparagine). Substrate-binding residues include lysine 375 and glutamate 379.

It belongs to the glycosyl hydrolase 6 (cellulase B) family. Both N- and O-glycosylated.

The protein resides in the secreted. It carries out the reaction Hydrolysis of (1-&gt;4)-beta-D-glucosidic linkages in cellulose and cellotetraose, releasing cellobiose from the non-reducing ends of the chains.. Exoglucanase that plays an important function in biomass degradation by catalyzing the hydrolysis of the non-reducing end beta-1,4-glucosidic linkages in cellulose and cellotetraose to release cellobiose. Hydrolyzes crystalline and amorphous cellulose but is inactive on hydroxyethyl cellulose, mannan, galactomannan, xyloglucan, arabinoxylan, arabinan, xylan, and pectin. The sequence is that of 1,4-beta-D-glucan cellobiohydrolase CEL6B from Podospora anserina (strain S / ATCC MYA-4624 / DSM 980 / FGSC 10383) (Pleurage anserina).